Here is a 215-residue protein sequence, read N- to C-terminus: Serine acetyltransferase (215 aa).

It belongs to the transferase hexapeptide repeat family.

It is found in the cytoplasm. It carries out the reaction L-serine + acetyl-CoA = O-acetyl-L-serine + CoA. It participates in amino-acid biosynthesis; L-cysteine biosynthesis; L-cysteine from L-serine: step 1/2. This Staphylococcus aureus (strain MRSA252) protein is Serine acetyltransferase (cysE).